The sequence spans 232 residues: UPF0758 protein EF_2926 (232 aa).

In terms of domain architecture, MPN spans 107-229 (KVTSSQQVAQ…YISLREENFF (123 aa)). Positions 178, 180, and 191 each coordinate Zn(2+). Residues 178 to 191 (HNHPSGNPTPSPQD) carry the JAMM motif motif.

The protein belongs to the UPF0758 family.

This chain is UPF0758 protein EF_2926, found in Enterococcus faecalis (strain ATCC 700802 / V583).